Consider the following 355-residue polypeptide: MLLDKLKPFVEKYNEINQMLSSPEITQDIKRMTKLSREARSLEPIVEKAKEYENIINTIEEAKMMLDDPEMAELAKEELKEAEEKLPELEEEIKILLLPKDPNDDKNIFLEIRAGTGGDEAALFVGDLLKAYLRYADNKGWKVEIVSESKSDAGGYKEIILLIKGESVYSRLKYEGGTHRVQRIPATESQGRIHTSAVTVAIMPEVDDVDIELDPKDIKIEVMRAGGAGGQHVNKTESAVRMTHIPTGITVSMQDERSQQRNKEKAMQILKARVFEKLENERLAAIGEARKSQVGSGDRSERIRTYNYPQNRITDHRIGLTLYRLEQIMSEGLFDEIIDPLIAHYQAEALKEAGL.

At glutamine 231 the chain carries N5-methylglutamine.

This sequence belongs to the prokaryotic/mitochondrial release factor family. In terms of processing, methylated by PrmC. Methylation increases the termination efficiency of RF1.

It is found in the cytoplasm. Peptide chain release factor 1 directs the termination of translation in response to the peptide chain termination codons UAG and UAA. This is Peptide chain release factor 1 from Nautilia profundicola (strain ATCC BAA-1463 / DSM 18972 / AmH).